We begin with the raw amino-acid sequence, 366 residues long: tRNA/tmRNA (uracil-C(5))-methyltransferase (366 aa).

S-adenosyl-L-methionine-binding residues include Gln-190, Tyr-218, Asn-223, Glu-239, and Asp-299. The active-site Nucleophile is the Cys-324. Glu-358 functions as the Proton acceptor in the catalytic mechanism.

The protein belongs to the class I-like SAM-binding methyltransferase superfamily. RNA M5U methyltransferase family. TrmA subfamily.

It carries out the reaction uridine(54) in tRNA + S-adenosyl-L-methionine = 5-methyluridine(54) in tRNA + S-adenosyl-L-homocysteine + H(+). The catalysed reaction is uridine(341) in tmRNA + S-adenosyl-L-methionine = 5-methyluridine(341) in tmRNA + S-adenosyl-L-homocysteine + H(+). In terms of biological role, dual-specificity methyltransferase that catalyzes the formation of 5-methyluridine at position 54 (m5U54) in all tRNAs, and that of position 341 (m5U341) in tmRNA (transfer-mRNA). In Shigella flexneri serotype 5b (strain 8401), this protein is tRNA/tmRNA (uracil-C(5))-methyltransferase.